The sequence spans 357 residues: DNA replication and repair protein RecF (357 aa).

30–37 lines the ATP pocket; sequence GANGSGKT.

The protein belongs to the RecF family.

Its subcellular location is the cytoplasm. In terms of biological role, the RecF protein is involved in DNA metabolism; it is required for DNA replication and normal SOS inducibility. RecF binds preferentially to single-stranded, linear DNA. It also seems to bind ATP. This Salmonella heidelberg (strain SL476) protein is DNA replication and repair protein RecF.